Consider the following 252-residue polypeptide: Triosephosphate isomerase (252 aa).

9–11 (NWK) serves as a coordination point for substrate. His-98 functions as the Electrophile in the catalytic mechanism. Glu-170 acts as the Proton acceptor in catalysis. Substrate contacts are provided by Gly-176 and Ser-215.

The protein belongs to the triosephosphate isomerase family. In terms of assembly, homodimer.

It is found in the cytoplasm. The catalysed reaction is D-glyceraldehyde 3-phosphate = dihydroxyacetone phosphate. The protein operates within carbohydrate biosynthesis; gluconeogenesis. Its pathway is carbohydrate degradation; glycolysis; D-glyceraldehyde 3-phosphate from glycerone phosphate: step 1/1. Involved in the gluconeogenesis. Catalyzes stereospecifically the conversion of dihydroxyacetone phosphate (DHAP) to D-glyceraldehyde-3-phosphate (G3P). The sequence is that of Triosephosphate isomerase from Buchnera aphidicola subsp. Baizongia pistaciae (strain Bp).